The sequence spans 161 residues: ATP synthase subunit b (161 aa).

The helical transmembrane segment at 1 to 21 (MYLNATILGQVIAFILFVWFC) threads the bilayer.

The protein belongs to the ATPase B chain family. In terms of assembly, F-type ATPases have 2 components, F(1) - the catalytic core - and F(0) - the membrane proton channel. F(1) has five subunits: alpha(3), beta(3), gamma(1), delta(1), epsilon(1). F(0) has three main subunits: a(1), b(2) and c(10-14). The alpha and beta chains form an alternating ring which encloses part of the gamma chain. F(1) is attached to F(0) by a central stalk formed by the gamma and epsilon chains, while a peripheral stalk is formed by the delta and b chains.

It is found in the cell inner membrane. F(1)F(0) ATP synthase produces ATP from ADP in the presence of a proton or sodium gradient. F-type ATPases consist of two structural domains, F(1) containing the extramembraneous catalytic core and F(0) containing the membrane proton channel, linked together by a central stalk and a peripheral stalk. During catalysis, ATP synthesis in the catalytic domain of F(1) is coupled via a rotary mechanism of the central stalk subunits to proton translocation. Its function is as follows. Component of the F(0) channel, it forms part of the peripheral stalk, linking F(1) to F(0). The protein is ATP synthase subunit b of Blochmanniella floridana.